A 129-amino-acid chain; its full sequence is Small ribosomal subunit protein bS16m (129 aa).

It belongs to the bacterial ribosomal protein bS16 family. Component of the mitochondrial ribosome small subunit (28S) which comprises a 12S rRNA and about 30 distinct proteins.

It localises to the mitochondrion. This Drosophila melanogaster (Fruit fly) protein is Small ribosomal subunit protein bS16m (mRpS16).